Here is a 504-residue protein sequence, read N- to C-terminus: 2,3-bisphosphoglycerate-independent phosphoglycerate mutase (504 aa).

The Mn(2+) site is built by D9 and S59. Residue S59 is the Phosphoserine intermediate of the active site. Substrate is bound by residues H120, 149-150 (RD), R181, R187, 253-256 (RPDR), and K326. Mn(2+) contacts are provided by D393, H397, D434, H435, and H451.

Belongs to the BPG-independent phosphoglycerate mutase family. Requires Mn(2+) as cofactor.

The enzyme catalyses (2R)-2-phosphoglycerate = (2R)-3-phosphoglycerate. The protein operates within carbohydrate degradation; glycolysis; pyruvate from D-glyceraldehyde 3-phosphate: step 3/5. Functionally, catalyzes the interconversion of 2-phosphoglycerate and 3-phosphoglycerate. This Haloquadratum walsbyi (strain DSM 16790 / HBSQ001) protein is 2,3-bisphosphoglycerate-independent phosphoglycerate mutase.